The chain runs to 304 residues: Ribosomal protein L11 methyltransferase (304 aa).

S-adenosyl-L-methionine contacts are provided by threonine 156, glycine 177, aspartate 199, and asparagine 240.

The protein belongs to the methyltransferase superfamily. PrmA family.

Its subcellular location is the cytoplasm. It carries out the reaction L-lysyl-[protein] + 3 S-adenosyl-L-methionine = N(6),N(6),N(6)-trimethyl-L-lysyl-[protein] + 3 S-adenosyl-L-homocysteine + 3 H(+). In terms of biological role, methylates ribosomal protein L11. This Symbiobacterium thermophilum (strain DSM 24528 / JCM 14929 / IAM 14863 / T) protein is Ribosomal protein L11 methyltransferase.